The primary structure comprises 461 residues: Probable tubulin polyglutamylase TTLL9 (461 aa).

Over residues 1–10 the composition is skewed to polar residues; sequence MSRQKSQTSK. Residues 1-20 form a disordered region; sequence MSRQKSQTSKGHGASKGKER. Residues 22-402 form the TTL domain; sequence QRTLIRFKTT…EARLTGKEKR (381 aa). ATP is bound by residues K149 and 155–156; that span reads QG. Q155 provides a ligand contact to a protein. Residues 186-197 are compositionally biased toward polar residues; that stretch reads QATRANVNPSGS. Residues 186–208 are disordered; the sequence is QATRANVNPSGSHDTRSSDDQKD. The span at 198-208 shows a compositional bias: basic and acidic residues; sequence HDTRSSDDQKD. Residues 218-221 and 231-233 contribute to the ATP site; these read QRYV and KFD. An L-glutamate-binding site is contributed by R257. 276 to 277 is a binding site for ATP; that stretch reads TN. K294 contributes to the L-glutamate binding site. The Mg(2+) site is built by D348, E361, and N363. K379 contacts L-glutamate.

Belongs to the tubulin--tyrosine ligase family. Mg(2+) serves as cofactor.

Its subcellular location is the cytoplasm. The protein localises to the cytoskeleton. The protein resides in the cilium basal body. It is found in the flagellum axoneme. It catalyses the reaction (L-glutamyl)(n)-gamma-L-glutamyl-L-glutamyl-[protein] + L-glutamate + ATP = (L-glutamyl)(n+1)-gamma-L-glutamyl-L-glutamyl-[protein] + ADP + phosphate + H(+). Probable tubulin polyglutamylase that generates side chains of glutamate on the gamma-carboxyl group of specific glutamate residues within the C-terminal tail of target proteins. Similar to TTLL1, may acquire enzymatic activity only in complex with other proteins as it is most likely lacking domains important for autonomous activity. Mediates tubulin polyglutamylation which induces establishment of microtubule heterogeneity in sperm flagella, thereby playing a role in normal motile flagella axoneme structure and sperm flagella beating pattern. The polypeptide is Probable tubulin polyglutamylase TTLL9 (Ttll9) (Rattus norvegicus (Rat)).